We begin with the raw amino-acid sequence, 499 residues long: Glutamyl-tRNA(Gln) amidotransferase subunit A, mitochondrial (499 aa).

Active-site charge relay system residues include Lys-61 and Ser-139. Catalysis depends on Ser-163, which acts as the Acyl-ester intermediate.

It belongs to the amidase family. GatA subfamily. Subunit of the heterotrimeric GatCAB amidotransferase (AdT) complex, composed of A, B and C subunits.

It is found in the mitochondrion. The catalysed reaction is L-glutamyl-tRNA(Gln) + L-glutamine + ATP + H2O = L-glutaminyl-tRNA(Gln) + L-glutamate + ADP + phosphate + H(+). Allows the formation of correctly charged Gln-tRNA(Gln) through the transamidation of misacylated Glu-tRNA(Gln) in the mitochondria. The reaction takes place in the presence of glutamine and ATP through an activated gamma-phospho-Glu-tRNA(Gln). In Coccidioides posadasii (strain C735) (Valley fever fungus), this protein is Glutamyl-tRNA(Gln) amidotransferase subunit A, mitochondrial.